Reading from the N-terminus, the 463-residue chain is MTTETRSLYSQLPAIDRLLRDSSFLSLRDTYGHTRVVELLRQMLDEAREVIRDSQTLPAWCENWAQEVDARLTKEAQSALRPVINLTGTVLHTNLGRALQAEAAVEAVAQAMRSPVTLEYDLDDAGRGHRDRALAQLLCRITGAEDACIVNNNAAAVLLMLAATASGKEVVVSRGELVEIGGAFRIPDVMRQAGCTLHEVGTTNRTHANDYRQAVNENTALLMKVHTSNYSIQGFTKAIDEAELVALGKELDVPVVTDLGSGSLVDLSQYGLPKEPMPQELIAAGVSLVSFSGDKLLGGPQAGIIVGKKEMIARLQSHPLKRALRADKMTLAALEATLRLYLHPEALSEKLPTLRLLTRSAEVIQIQAQRLQAPLAAHYGAEFAVQVMPCLSQIGSGSLPVDRLPSAALTFTPHDGRGSHLESLAARWRELPVPVIGRIYDGRLWLDLRCLEDEQRFLEMLLK.

The residue at position 295 (Lys-295) is an N6-(pyridoxal phosphate)lysine.

It belongs to the SelA family. In terms of assembly, homodecamer; pentamer of dimers. Binds only one seryl-tRNA(Sec) per dimer. Requires pyridoxal 5'-phosphate as cofactor.

It localises to the cytoplasm. The catalysed reaction is L-seryl-tRNA(Sec) + selenophosphate + H(+) = L-selenocysteinyl-tRNA(Sec) + phosphate. Its pathway is aminoacyl-tRNA biosynthesis; selenocysteinyl-tRNA(Sec) biosynthesis; selenocysteinyl-tRNA(Sec) from L-seryl-tRNA(Sec) (bacterial route): step 1/1. Its function is as follows. Converts seryl-tRNA(Sec) to selenocysteinyl-tRNA(Sec) required for selenoprotein biosynthesis. This chain is L-seryl-tRNA(Sec) selenium transferase, found in Shigella boydii serotype 18 (strain CDC 3083-94 / BS512).